Reading from the N-terminus, the 357-residue chain is Probable dual-specificity RNA methyltransferase RlmN (357 aa).

Catalysis depends on E95, which acts as the Proton acceptor. Residues 105-343 (KKSSYTLCLS…VSIREERGSD (239 aa)) enclose the Radical SAM core domain. C112 and C348 are oxidised to a cystine. C119, C123, and C126 together coordinate [4Fe-4S] cluster. S-adenosyl-L-methionine is bound by residues 174–175 (GE), S206, 229–231 (SLH), and N305. The S-methylcysteine intermediate role is filled by C348.

It belongs to the radical SAM superfamily. RlmN family. [4Fe-4S] cluster is required as a cofactor.

It localises to the cytoplasm. The catalysed reaction is adenosine(2503) in 23S rRNA + 2 reduced [2Fe-2S]-[ferredoxin] + 2 S-adenosyl-L-methionine = 2-methyladenosine(2503) in 23S rRNA + 5'-deoxyadenosine + L-methionine + 2 oxidized [2Fe-2S]-[ferredoxin] + S-adenosyl-L-homocysteine. The enzyme catalyses adenosine(37) in tRNA + 2 reduced [2Fe-2S]-[ferredoxin] + 2 S-adenosyl-L-methionine = 2-methyladenosine(37) in tRNA + 5'-deoxyadenosine + L-methionine + 2 oxidized [2Fe-2S]-[ferredoxin] + S-adenosyl-L-homocysteine. In terms of biological role, specifically methylates position 2 of adenine 2503 in 23S rRNA and position 2 of adenine 37 in tRNAs. This is Probable dual-specificity RNA methyltransferase RlmN from Syntrophomonas wolfei subsp. wolfei (strain DSM 2245B / Goettingen).